Consider the following 427-residue polypeptide: Serine--tRNA ligase (427 aa).

Residue 232–234 coordinates L-serine; that stretch reads TAE. 263–265 serves as a coordination point for ATP; it reads RSE. Glutamate 286 lines the L-serine pocket. Residue 350-353 coordinates ATP; the sequence is EISS. Serine 385 is a binding site for L-serine.

It belongs to the class-II aminoacyl-tRNA synthetase family. Type-1 seryl-tRNA synthetase subfamily. As to quaternary structure, homodimer. The tRNA molecule binds across the dimer.

It localises to the cytoplasm. The enzyme catalyses tRNA(Ser) + L-serine + ATP = L-seryl-tRNA(Ser) + AMP + diphosphate + H(+). It catalyses the reaction tRNA(Sec) + L-serine + ATP = L-seryl-tRNA(Sec) + AMP + diphosphate + H(+). The protein operates within aminoacyl-tRNA biosynthesis; selenocysteinyl-tRNA(Sec) biosynthesis; L-seryl-tRNA(Sec) from L-serine and tRNA(Sec): step 1/1. Functionally, catalyzes the attachment of serine to tRNA(Ser). Is also able to aminoacylate tRNA(Sec) with serine, to form the misacylated tRNA L-seryl-tRNA(Sec), which will be further converted into selenocysteinyl-tRNA(Sec). The sequence is that of Serine--tRNA ligase from Lacticaseibacillus casei (strain BL23) (Lactobacillus casei).